A 321-amino-acid polypeptide reads, in one-letter code: AA9 family lytic polysaccharide monooxygenase C (321 aa).

Residues 1 to 18 form the signal peptide; sequence MKLQLIIPFSFLISYVSA. Position 19 (H19) interacts with Cu(2+). N-linked (GlcNAc...) asparagine glycosylation occurs at N33. 2 disulfide bridges follow: C57–C191 and C161–C242. Cu(2+) is bound at residue H103. Positions 177 and 186 each coordinate O2. Y188 provides a ligand contact to Cu(2+). N195 is a glycosylation site (N-linked (GlcNAc...) asparagine). One can recognise a CBM1 domain in the interval 283–319; sequence GTAAIYAQCGGQGWTGATVCASGSKCVVSSAFYSQCL.

It belongs to the polysaccharide monooxygenase AA9 family. Cu(2+) serves as cofactor.

Its subcellular location is the secreted. The catalysed reaction is [(1-&gt;4)-beta-D-glucosyl]n+m + reduced acceptor + O2 = 4-dehydro-beta-D-glucosyl-[(1-&gt;4)-beta-D-glucosyl]n-1 + [(1-&gt;4)-beta-D-glucosyl]m + acceptor + H2O.. Functionally, major lytic polysaccharide monooxygenase (LPMO) that depolymerizes crystalline and amorphous polysaccharides via the oxidation of scissile alpha- or beta-(1-4)-glycosidic bonds, yielding C1 and C4 oxidation products. Catalysis by LPMOs requires the reduction of the active-site copper from Cu(II) to Cu(I) by a reducing agent and H(2)O(2) or O(2) as a cosubstrate. The polypeptide is AA9 family lytic polysaccharide monooxygenase C (Botryotinia fuckeliana (strain B05.10) (Noble rot fungus)).